The following is a 748-amino-acid chain: Translation factor GUF1 homolog 2, mitochondrial (748 aa).

A mitochondrion-targeting transit peptide spans 1–29 (MRVGCCLLLKPLRQRLCTASISSRHIMRW). A tr-type G domain is found at 94–276 (SHIRNVAVVA…AIIERVPPPT (183 aa)). GTP is bound by residues 103 to 110 (AHVDHGKT), 167 to 171 (DTPGH), and 221 to 224 (TKMD).

It belongs to the TRAFAC class translation factor GTPase superfamily. Classic translation factor GTPase family. LepA subfamily.

The protein localises to the mitochondrion inner membrane. It carries out the reaction GTP + H2O = GDP + phosphate + H(+). Functionally, promotes mitochondrial protein synthesis. May act as a fidelity factor of the translation reaction, by catalyzing a one-codon backward translocation of tRNAs on improperly translocated ribosomes. Binds to mitochondrial ribosomes in a GTP-dependent manner. The polypeptide is Translation factor GUF1 homolog 2, mitochondrial (Trypanosoma cruzi (strain CL Brener)).